Consider the following 515-residue polypeptide: SWI/SNF-related matrix-associated actin-dependent regulator of chromatin subfamily D member 1 (515 aa).

The interval 1–128 (MAARAGFQSV…RNHNAKKKKM (128 aa)) is disordered. The span at 14 to 23 (GGAGASGGAG) shows a compositional bias: gly residues. Residues 43 to 167 (APGQGLYRSP…DQTIMRKRLD (125 aa)) are interaction with ESR1, NR1H4, NR3C1, PGR and SMARCA4. Asymmetric dimethylarginine occurs at positions 68 and 88. Residue Lys-101 forms a Glycyl lysine isopeptide (Lys-Gly) (interchain with G-Cter in SUMO2) linkage. Over residues 103–117 (PAPQQIKQVQQQAVQ) the composition is skewed to low complexity. The interaction with SMARCC1 and SMARCC2 stretch occupies residues 168–474 (IQEALKRPIK…VMTDVVGNSE (307 aa)). Positions 180 to 515 (RKLRIFISNT…LEQALGIRNT (336 aa)) are necessary for GR/NR3C1-mediated remodeling and transcription from chromatin; required for GR/NR3C1 interaction with the BRG1/SMARCA4 complex in vivo. Thr-203 carries the post-translational modification Phosphothreonine. Residue Lys-223 is modified to N6-acetyllysine. The 78-residue stretch at 290 to 367 (YQPPQFKLDP…PQRLHALLMP (78 aa)) folds into the SWIB/MDM2 domain. Positions 412–440 (ASQQEIATLDNKIHETIETINQLKTQREF) form a coiled coil.

Belongs to the SMARCD family. In terms of assembly, component of the multiprotein chromatin-remodeling complexes SWI/SNF: SWI/SNF-A (BAF), SWI/SNF-B (PBAF) and related complexes. The canonical complex contains a catalytic subunit (either SMARCA4/BRG1/BAF190A or SMARCA2/BRM/BAF190B), and at least SMARCE1, ACTL6A/BAF53, SMARCC1/BAF155, SMARCC2/BAF170, and SMARCB1/SNF5/BAF47. Other subunits specific to each of the complexes may also be present permitting several possible combinations developmentally and tissue specific. Component of the BAF complex, which includes at least actin (ACTB), ARID1A/BAF250A, ARID1B/BAF250B, SMARCA2/BRM, SMARCA4/BRG1/BAF190A, ACTL6A/BAF53, ACTL6B/BAF53B, SMARCE1/BAF57, SMARCC1/BAF155, SMARCC2/BAF170, SMARCB1/SNF5/INI1, and one or more SMARCD1/BAF60A, SMARCD2/BAF60B, or SMARCD3/BAF60C. In muscle cells, the BAF complex also contains DPF3. Component of neural progenitors-specific chromatin remodeling complex (npBAF complex) composed of at least, ARID1A/BAF250A or ARID1B/BAF250B, SMARCD1/BAF60A, SMARCD3/BAF60C, SMARCA2/BRM/BAF190B, SMARCA4/BRG1/BAF190A, SMARCB1/BAF47, SMARCC1/BAF155, SMARCE1/BAF57, SMARCC2/BAF170, PHF10/BAF45A, ACTL6A/BAF53A and actin. Component of neuron-specific chromatin remodeling complex (nBAF complex) composed of at least, ARID1A/BAF250A or ARID1B/BAF250B, SMARCD1/BAF60A, SMARCD3/BAF60C, SMARCA2/BRM/BAF190B, SMARCA4/BRG1/BAF190A, SMARCB1/BAF47, SMARCC1/BAF155, SMARCE1/BAF57, SMARCC2/BAF170, DPF1/BAF45B, DPF3/BAF45C, ACTL6B/BAF53B and actin. Component of the SWI/SNF-B (PBAF) chromatin remodeling complex, at least composed of SMARCA4/BRG1, SMARCB1/BAF47/SNF5, ACTL6A/BAF53A or ACTL6B/BAF53B, SMARCE1/BAF57, SMARCD1/BAF60A, SMARCD2/BAF60B, perhaps SMARCD3/BAF60C, SMARCC1/BAF155, SMARCC2/BAF170, PBRM1/BAF180, ARID2/BAF200 and actin (ACTB). Component of SWI/SNF (GBAF) subcomplex, which includes at least BICRA or BICRAL (mutually exclusive), BRD9, SS18, SMARCA2/BRM, SMARCA4/BRG1/BAF190A, ACTL6A/BAF53, SMARCC1/BAF155, and SMARCD1/BAF60A. Specifically interacts with the VDR heterodimer complex. Interacts with ESR1, NR3C1, NR1H4, PGR, SMARCA4, SMARCC1 and SMARCC2. Interacts with DPF2. Interacts with FOS, FOSB, FOSL1 and FOSL2.

Its subcellular location is the nucleus. In terms of biological role, involved in transcriptional activation and repression of select genes by chromatin remodeling (alteration of DNA-nucleosome topology). Component of SWI/SNF chromatin remodeling complexes that carry out key enzymatic activities, changing chromatin structure by altering DNA-histone contacts within a nucleosome in an ATP-dependent manner. Belongs to the neural progenitors-specific chromatin remodeling complex (npBAF complex) and the neuron-specific chromatin remodeling complex (nBAF complex). During neural development a switch from a stem/progenitor to a postmitotic chromatin remodeling mechanism occurs as neurons exit the cell cycle and become committed to their adult state. The transition from proliferating neural stem/progenitor cells to postmitotic neurons requires a switch in subunit composition of the npBAF and nBAF complexes. As neural progenitors exit mitosis and differentiate into neurons, npBAF complexes which contain ACTL6A/BAF53A and PHF10/BAF45A, are exchanged for homologous alternative ACTL6B/BAF53B and DPF1/BAF45B or DPF3/BAF45C subunits in neuron-specific complexes (nBAF). The npBAF complex is essential for the self-renewal/proliferative capacity of the multipotent neural stem cells. The nBAF complex along with CREST plays a role regulating the activity of genes essential for dendrite growth. Has a strong influence on vitamin D-mediated transcriptional activity from an enhancer vitamin D receptor element (VDRE). May be a link between mammalian SWI-SNF-like chromatin remodeling complexes and the vitamin D receptor (VDR) heterodimer. Mediates critical interactions between nuclear receptors and the BRG1/SMARCA4 chromatin-remodeling complex for transactivation. Interacts with AKIRIN2. This is SWI/SNF-related matrix-associated actin-dependent regulator of chromatin subfamily D member 1 (SMARCD1) from Bos taurus (Bovine).